We begin with the raw amino-acid sequence, 20 residues long: Apidaecin 1+ (20 aa).

A disordered region spans residues G1–L20.

This sequence belongs to the apidaecin family.

The protein localises to the secreted. Functionally, antimicrobial peptide active against many Gram-negative enterobacterial and plant-associated bacterial species. Not active against other bacterial species like H.pylori, P.mirabilis, B.pertussis or N.gonorrhoeae. Its function is as follows. Among others, also active against C.jejuni and L.pneumophila but not against Y.enterocolitica. In terms of biological role, among others, also active against Y.enterocolitica butnot against L.pneumophila and C.jejuni. This chain is Apidaecin 1+, found in Pimpla disparis (Parasitic wasp).